Reading from the N-terminus, the 444-residue chain is Flagellum-specific ATP synthase (444 aa).

Ala-164–Ser-171 lines the ATP pocket.

The protein belongs to the ATPase alpha/beta chains family.

The protein resides in the cytoplasm. It catalyses the reaction ATP + H2O + 4 H(+)(in) = ADP + phosphate + 5 H(+)(out). Functionally, probable catalytic subunit of a protein translocase for flagellum-specific export, or a proton translocase involved in local circuits at the flagellum. The sequence is that of Flagellum-specific ATP synthase (fliI) from Caulobacter vibrioides (strain ATCC 19089 / CIP 103742 / CB 15) (Caulobacter crescentus).